Consider the following 349-residue polypeptide: D-alanine--D-alanine ligase (349 aa).

The region spanning 133–335 (QVLESATTIP…YSVLIEELVS (203 aa)) is the ATP-grasp domain. 163 to 218 (EEKLIYPVFVKPANMGSSVGISKAENRTDLKQAIALALKYDSRVLIEQGVDAREIE) contacts ATP. Asp-289, Glu-302, and Asn-304 together coordinate Mg(2+).

It belongs to the D-alanine--D-alanine ligase family. Requires Mg(2+) as cofactor. Mn(2+) serves as cofactor.

Its subcellular location is the cytoplasm. It carries out the reaction 2 D-alanine + ATP = D-alanyl-D-alanine + ADP + phosphate + H(+). It participates in cell wall biogenesis; peptidoglycan biosynthesis. Cell wall formation. The protein is D-alanine--D-alanine ligase of Streptococcus mutans serotype c (strain ATCC 700610 / UA159).